The primary structure comprises 128 residues: Large ribosomal subunit protein uL18 (128 aa).

The tract at residues 1 to 36 (MAKRSSLTRRGVSPRAAARARRHMRVRKKVRGTPER) is disordered. Basic residues predominate over residues 18-31 (ARARRHMRVRKKVR).

Belongs to the universal ribosomal protein uL18 family. As to quaternary structure, part of the 50S ribosomal subunit; part of the 5S rRNA/L5/L18/L25 subcomplex. Contacts the 5S and 23S rRNAs.

Functionally, this is one of the proteins that bind and probably mediate the attachment of the 5S RNA into the large ribosomal subunit, where it forms part of the central protuberance. The chain is Large ribosomal subunit protein uL18 from Thermobifida fusca (strain YX).